Here is a 103-residue protein sequence, read N- to C-terminus: Large ribosomal subunit protein bL21 (103 aa).

Belongs to the bacterial ribosomal protein bL21 family. In terms of assembly, part of the 50S ribosomal subunit. Contacts protein L20.

In terms of biological role, this protein binds to 23S rRNA in the presence of protein L20. The chain is Large ribosomal subunit protein bL21 from Ralstonia nicotianae (strain ATCC BAA-1114 / GMI1000) (Ralstonia solanacearum).